Consider the following 126-residue polypeptide: Glycine cleavage system H protein (126 aa).

In terms of domain architecture, Lipoyl-binding spans 22–104 (KLRIGITDFA…YEKAWMIVIE (83 aa)). Lys63 is modified (N6-lipoyllysine).

It belongs to the GcvH family. The glycine cleavage system is composed of four proteins: P, T, L and H. Requires (R)-lipoate as cofactor.

In terms of biological role, the glycine cleavage system catalyzes the degradation of glycine. The H protein shuttles the methylamine group of glycine from the P protein to the T protein. Functionally, is also involved in protein lipoylation via its role as an octanoyl/lipoyl carrier protein intermediate. This chain is Glycine cleavage system H protein, found in Oceanobacillus iheyensis (strain DSM 14371 / CIP 107618 / JCM 11309 / KCTC 3954 / HTE831).